The sequence spans 339 residues: MNTRFLDACWGKPVDRTPVWLMRQAGRYLPDYMRVRSKCTFLELCKTPELAAEVTIQPVDILGVDAAILFSDILTPVEPMGMALDFVPGPVFEHPIRTMADVEKLRIPQMEQDVPYVLETIKILRRELANKVPLIGFGGAPFTLACYMVEGKGSKDWATIKRMMYAAPEVYAALMEKVTMMDMEYLNAQIKAGAQAIQIFDTWGGVLSPSDYEKFVLPYTTKLINGLNRQNVPVIHFVKGAGTMLDTVKKAGGDVMGLDWHTNLGKARDILGSMAVQGNLDPTVLFAPNDVIEKEVKRVLDENGGRSGHIFNLGHGILPTVPPENAIHMVECVHRLSQQ.

Substrate-binding positions include 23-27, aspartate 72, tyrosine 147, threonine 202, and histidine 315; that span reads RQAGR.

This sequence belongs to the uroporphyrinogen decarboxylase family. In terms of assembly, homodimer.

It localises to the cytoplasm. It catalyses the reaction uroporphyrinogen III + 4 H(+) = coproporphyrinogen III + 4 CO2. The protein operates within porphyrin-containing compound metabolism; protoporphyrin-IX biosynthesis; coproporphyrinogen-III from 5-aminolevulinate: step 4/4. In terms of biological role, catalyzes the decarboxylation of four acetate groups of uroporphyrinogen-III to yield coproporphyrinogen-III. The sequence is that of Uroporphyrinogen decarboxylase from Geotalea daltonii (strain DSM 22248 / JCM 15807 / FRC-32) (Geobacter daltonii).